Here is a 660-residue protein sequence, read N- to C-terminus: Kinesin-like protein KIF22 (660 aa).

A disordered region spans residues 1 to 31 (MSLRAKTCPQRREMASATSGPGRCVSKGGLG). Positions 38-363 (RVRVAVRLRP…LNFTARSKEV (326 aa)) constitute a Kinesin motor domain. Residue 122 to 129 (GPTGAGKT) participates in ATP binding. A disordered region spans residues 391–418 (PSEAKKAKGPEEESTGSPESTAAPASAS). Low complexity predominate over residues 405-418 (TGSPESTAAPASAS). Phosphoserine is present on residues serine 407, serine 422, and serine 447. Residue lysine 460 forms a Glycyl lysine isopeptide (Lys-Gly) (interchain with G-Cter in SUMO2) linkage. Residues 460–505 (KRERMVLMKTVEEKNLEIERLKMKQKELEAKVLAQEAPDPREKENT) adopt a coiled-coil conformation. Disordered regions lie at residues 493-516 (AQEAPDPREKENTPTILQPPASYS) and 534-567 (IQKQRESSNQIQLLKKGPKRKLEPSPESEAVEKD). The segment covering 505 to 516 (TPTILQPPASYS) has biased composition (polar residues). 2 positions are modified to phosphoserine: serine 540 and serine 576.

Belongs to the TRAFAC class myosin-kinesin ATPase superfamily. Kinesin family. Interacts with FAM83D and SIAH1. Post-translationally, ubiquitinated; mediated by SIAH1 and leading to its subsequent proteasomal degradation.

Its subcellular location is the nucleus. It localises to the cytoplasm. It is found in the cytoskeleton. Functionally, kinesin family member that is involved in spindle formation and the movements of chromosomes during mitosis and meiosis. Binds to microtubules and to DNA. Plays a role in congression of laterally attached chromosomes in NDC80-depleted cells. The sequence is that of Kinesin-like protein KIF22 (Kif22) from Mus musculus (Mouse).